The primary structure comprises 463 residues: Phosphoglycerate transporter protein (463 aa).

At 1-29 (MLTILKTGQSAHKVPPEKVQATYGRYRIQ) the chain is on the cytoplasmic side. A run of 12 helical transmembrane segments spans residues 30–50 (ALLSVFLGYLAYYIVRNNFTL), 59–79 (LDLSATQIGLLSSCMLIAYGI), 106–126 (IVNVGLGFSSAFWIFAALVVF), 127–147 (NGLFQGMGVGPSFITIANWFP), 160–180 (ISHNVGGGIVAPIVGAAFAIL), 188–208 (ASYIVPACVAVIFALIVLVLG), 267–287 (VFVYMVRFGMISWLPIYLLTV), 297–317 (VAFLFFEWAAIPSTLLAGWLS), 326–346 (MPLAMICMALIFVCLIGYWKS), 349–369 (LLMVTIFAAIVGCLIYVPQFL), 391–411 (GFMSYIFGASLGTSLFGVMVD), and 413–433 (LGWYGGFYLLMGGIVCCILFC).

It belongs to the major facilitator superfamily. Organophosphate:Pi antiporter (OPA) (TC 2.A.1.4) family.

The protein resides in the cell inner membrane. Its function is as follows. The phosphoglycerate transporter protein is a part of the PGT transport system. It is the membrane bound transporter for phosphoglycerate into salmonella. This chain is Phosphoglycerate transporter protein (pgtP), found in Salmonella typhimurium (strain LT2 / SGSC1412 / ATCC 700720).